Consider the following 1025-residue polypeptide: Multidrug resistance protein MdtC (1025 aa).

Transmembrane regions (helical) follow at residues 3 to 23, 333 to 353, 360 to 380, 387 to 407, 431 to 451, 463 to 483, 528 to 548, 853 to 873, 875 to 895, 897 to 917, 953 to 973, and 984 to 1004; these read FFALFIYRPVATILLSVAITL, EVEQTLIISVALVILVVFLFL, IIPAVAVPVSLIGTFAAMYLC, LSLMALTIATGFVVDDAIVVL, VGFTVLSMSLSLVAVFLPLLL, FAVTLSVAIGISLLVSLTLTP, LVGVVLLGTIALNIWLYISIP, VILIIAAIATVYIVLGILYES, VHPLTILSTLPSAGVGALLAL, LFNAPFSLIALIGIMLLIGIV, PIMMTTLAALFGALPLVLSGG, and ITIVGGLVMSQLLTLYTTPVV.

It belongs to the resistance-nodulation-cell division (RND) (TC 2.A.6) family. MdtC subfamily. In terms of assembly, part of a tripartite efflux system composed of MdtA, MdtB and MdtC. MdtC forms a heteromultimer with MdtB.

Its subcellular location is the cell inner membrane. The MdtABC tripartite complex confers resistance against novobiocin and deoxycholate. The protein is Multidrug resistance protein MdtC of Escherichia coli (strain SMS-3-5 / SECEC).